The following is a 333-amino-acid chain: Structure-specific endonuclease subunit SLX1 homolog (333 aa).

The 90-residue stretch at 68 to 157 (DFFGVYCLLS…KSRRLRLLNL (90 aa)) folds into the GIY-YIG domain. The SLX1-type zinc finger occupies 237–293 (CSLCLKPILSISELLRCHANETCKSHFHMRCLSKHALNAVDEYRTSLFPIQGQCPKC).

This sequence belongs to the SLX1 family. As to quaternary structure, forms a heterodimer with a member of the SLX4 family. It depends on a divalent metal cation as a cofactor.

It localises to the nucleus. Catalytic subunit of a heterodimeric structure-specific endonuclease that resolves DNA secondary structures generated during DNA repair and recombination. Has endonuclease activity towards branched DNA substrates, introducing single-strand cuts in duplex DNA close to junctions with ss-DNA. The polypeptide is Structure-specific endonuclease subunit SLX1 homolog (Brugia malayi (Filarial nematode worm)).